Here is a 637-residue protein sequence, read N- to C-terminus: tRNA 5-methylaminomethyl-2-thiouridine biosynthesis bifunctional protein MnmC (637 aa).

The tract at residues 1–20 (MSERIEWLEDGTAGGSPYSP) is disordered. Residues 1 to 232 (MSERIEWLED…KRDNLQGEYQ (232 aa)) form a tRNA (mnm(5)s(2)U34)-methyltransferase region. The interval 255–637 (IGAGLAGSAV…YATRLQPSGS (383 aa)) is FAD-dependent cmnm(5)s(2)U34 oxidoreductase.

It in the N-terminal section; belongs to the methyltransferase superfamily. tRNA (mnm(5)s(2)U34)-methyltransferase family. The protein in the C-terminal section; belongs to the DAO family. Requires FAD as cofactor.

The protein localises to the cytoplasm. It catalyses the reaction 5-aminomethyl-2-thiouridine(34) in tRNA + S-adenosyl-L-methionine = 5-methylaminomethyl-2-thiouridine(34) in tRNA + S-adenosyl-L-homocysteine + H(+). Functionally, catalyzes the last two steps in the biosynthesis of 5-methylaminomethyl-2-thiouridine (mnm(5)s(2)U) at the wobble position (U34) in tRNA. Catalyzes the FAD-dependent demodification of cmnm(5)s(2)U34 to nm(5)s(2)U34, followed by the transfer of a methyl group from S-adenosyl-L-methionine to nm(5)s(2)U34, to form mnm(5)s(2)U34. The protein is tRNA 5-methylaminomethyl-2-thiouridine biosynthesis bifunctional protein MnmC of Polaromonas naphthalenivorans (strain CJ2).